The sequence spans 327 residues: GMP reductase (327 aa).

The Thioimidate intermediate role is filled by Cys176. 205-228 (IIADGGIRTHGDIVKSIRFGATMV) is a binding site for NADP(+).

This sequence belongs to the IMPDH/GMPR family. GuaC type 2 subfamily.

The enzyme catalyses IMP + NH4(+) + NADP(+) = GMP + NADPH + 2 H(+). In terms of biological role, catalyzes the irreversible NADPH-dependent deamination of GMP to IMP. It functions in the conversion of nucleobase, nucleoside and nucleotide derivatives of G to A nucleotides, and in maintaining the intracellular balance of A and G nucleotides. The chain is GMP reductase from Helicobacter pylori (strain ATCC 700392 / 26695) (Campylobacter pylori).